The following is an 807-amino-acid chain: Glycerol-3-phosphate acyltransferase (807 aa).

Residues Cys308 to Met313 carry the HXXXXD motif motif.

It belongs to the GPAT/DAPAT family.

It localises to the cell inner membrane. The catalysed reaction is sn-glycerol 3-phosphate + an acyl-CoA = a 1-acyl-sn-glycero-3-phosphate + CoA. The protein operates within phospholipid metabolism; CDP-diacylglycerol biosynthesis; CDP-diacylglycerol from sn-glycerol 3-phosphate: step 1/3. The sequence is that of Glycerol-3-phosphate acyltransferase from Shewanella loihica (strain ATCC BAA-1088 / PV-4).